Here is a 366-residue protein sequence, read N- to C-terminus: Cyanide hydratase (366 aa).

One can recognise a CN hydrolase domain in the interval 6 to 285; the sequence is YKAAAVTSEP…DGLMFVDIDL (280 aa). Catalysis depends on Glu-46, which acts as the Proton acceptor. Lys-128 is a catalytic residue. Catalysis depends on Cys-163, which acts as the Nucleophile.

It belongs to the carbon-nitrogen hydrolase superfamily. Nitrilase family. Oligomer of dimers, forming left-handed helical fibers.

It catalyses the reaction formamide = hydrogen cyanide + H2O. Its function is as follows. Catalyzes the hydration of cyanide to formamide. Degradation of cyanide may be important for plant pathogenic fungi in infection of cyanogenic plants. Can also transform some nitriles like 2-cyanopyridine and fumaronitrile. The sequence is that of Cyanide hydratase from Pyrenophora teres f. teres (strain 0-1) (Barley net blotch fungus).